The primary structure comprises 294 residues: Filamin-B (294 aa).

Filamin repeat units lie at residues Gly-1 to Val-67 and Gly-71 to Val-163. Phosphoserine is present on residues Ser-61 and Ser-157. Lys-160 is covalently cross-linked (Glycyl lysine isopeptide (Lys-Gly) (interchain with G-Cter in ISG15)). The interval Thr-164–Pro-198 is hinge 2. The segment at Thr-164–Pro-294 is self-association site, tail. 2 positions are modified to phosphoserine: Ser-173 and Ser-184. Residues Lys-199–Val-293 form a Filamin 24 repeat. An N6-succinyllysine mark is found at Lys-210 and Lys-216. Lys-268 is subject to N6-acetyllysine.

Belongs to the filamin family. Homodimer. Interacts with FLNA, FLNC, INPPL1, ITGB1A, ITGB1D, ITGB3, ITGB6, MYOT, MYOZ1, PSEN1 and PSEN2. Interacts with MICALL2. Interacts with RFLNA and RFLNB. Interacts with HTLV-I viral p13 protein. Interacts with ASB2; the interaction targets FLNB for proteasomal degradation. ISGylation prevents ability to interact with the upstream activators of the JNK cascade and inhibits IFNA-induced JNK signaling. Post-translationally, ubiquitination by a SCF-like complex containing ASB2 leads to proteasomal degradation which promotes muscle differentiation.

It is found in the cytoplasm. Its subcellular location is the cell cortex. The protein resides in the cytoskeleton. The protein localises to the myofibril. It localises to the sarcomere. It is found in the z line. Its function is as follows. Connects cell membrane constituents to the actin cytoskeleton. May promote orthogonal branching of actin filaments and links actin filaments to membrane glycoproteins. Anchors various transmembrane proteins to the actin cytoskeleton. The chain is Filamin-B (FLNB) from Oryctolagus cuniculus (Rabbit).